We begin with the raw amino-acid sequence, 263 residues long: uncharacterized protein (263 aa).

12–19 (KGGVGKTT) lines the ATP pocket.

Belongs to the ParA family. MinD subfamily.

This is an uncharacterized protein from Methanocaldococcus jannaschii (strain ATCC 43067 / DSM 2661 / JAL-1 / JCM 10045 / NBRC 100440) (Methanococcus jannaschii).